Consider the following 606-residue polypeptide: Elongation factor 4 (606 aa).

In terms of domain architecture, tr-type G spans 7–189 (SRIRNFCIIA…AVVDRVPPPK (183 aa)). Residues 19-24 (DHGKST) and 136-139 (NKID) each bind GTP.

It belongs to the TRAFAC class translation factor GTPase superfamily. Classic translation factor GTPase family. LepA subfamily.

The protein localises to the cell inner membrane. It catalyses the reaction GTP + H2O = GDP + phosphate + H(+). In terms of biological role, required for accurate and efficient protein synthesis under certain stress conditions. May act as a fidelity factor of the translation reaction, by catalyzing a one-codon backward translocation of tRNAs on improperly translocated ribosomes. Back-translocation proceeds from a post-translocation (POST) complex to a pre-translocation (PRE) complex, thus giving elongation factor G a second chance to translocate the tRNAs correctly. Binds to ribosomes in a GTP-dependent manner. This chain is Elongation factor 4, found in Synechococcus sp. (strain CC9605).